We begin with the raw amino-acid sequence, 119 residues long: Large ribosomal subunit protein bL20 (119 aa).

Belongs to the bacterial ribosomal protein bL20 family.

Binds directly to 23S ribosomal RNA and is necessary for the in vitro assembly process of the 50S ribosomal subunit. It is not involved in the protein synthesizing functions of that subunit. In Bordetella avium (strain 197N), this protein is Large ribosomal subunit protein bL20.